We begin with the raw amino-acid sequence, 1467 residues long: Gag-Pol polyprotein (1467 aa).

The N-myristoyl glycine; by host moiety is linked to residue Gly2. The short motif at Phe16 to Arg22 is the Nuclear export signal element. Positions Lys26 to Lys32 match the Nuclear localization signal motif. The tract at residues Asn116 to Asn144 is disordered. CCHC-type zinc fingers lie at residues Val402–Glu419 and Met423–Gly440. The 72-residue stretch at Ile535–Leu606 folds into the Peptidase A2 domain. Asp540 serves as the catalytic For protease activity; shared with dimeric partner. The Reverse transcriptase domain occupies Glu662–Leu852. Positions 728, 803, and 804 each coordinate Mg(2+). The RT 'primer grip' stretch occupies residues Tyr845 to Trp853. Positions Trp1015–Trp1031 match the Tryptophan repeat motif motif. An RNase H type-1 domain is found at Pro1050–Arg1173. 2 residues coordinate Mg(2+): Asp1114 and Asp1165. An Integrase-type zinc finger spans residues Glu1179 to Gln1220. His1188, His1192, Cys1216, and Cys1219 together coordinate Zn(2+). In terms of domain architecture, Integrase catalytic spans Val1230–Ile1380. Mg(2+) is bound by residues Asp1240 and Asp1292. A DNA-binding region (integrase-type) is located at residues Phe1399–Asp1446. The disordered stretch occupies residues Tyr1447 to Asn1467.

In terms of assembly, homotrimer. Interacts with gp41 (via C-terminus). As to quaternary structure, homodimer. The active site consists of two apposed aspartic acid residues. Heterodimer of p66 RT and p51 RT (RT p66/p51). Heterodimerization of RT is essential for DNA polymerase activity. Despite the sequence identities, p66 RT and p51 RT have distinct folding. In terms of assembly, homotetramer; may further associate as a homohexadecamer. The cofactor is Mg(2+). Post-translationally, specific enzymatic cleavages by the viral protease yield mature proteins. The protease is released by autocatalytic cleavage. The polyprotein is cleaved during and after budding, this process is termed maturation. Proteolytic cleavage of p66 RT removes the RNase H domain to yield the p51 RT subunit. Capsid protein p24 is phosphorylated.

It localises to the virion. It is found in the host nucleus. Its subcellular location is the host cytoplasm. The protein localises to the host cell membrane. The catalysed reaction is Specific for a P1 residue that is hydrophobic, and P1' variable, but often Pro.. It catalyses the reaction Endohydrolysis of RNA in RNA/DNA hybrids. Three different cleavage modes: 1. sequence-specific internal cleavage of RNA. Human immunodeficiency virus type 1 and Moloney murine leukemia virus enzymes prefer to cleave the RNA strand one nucleotide away from the RNA-DNA junction. 2. RNA 5'-end directed cleavage 13-19 nucleotides from the RNA end. 3. DNA 3'-end directed cleavage 15-20 nucleotides away from the primer terminus.. The enzyme catalyses 3'-end directed exonucleolytic cleavage of viral RNA-DNA hybrid.. It carries out the reaction DNA(n) + a 2'-deoxyribonucleoside 5'-triphosphate = DNA(n+1) + diphosphate. The viral protease is inhibited by many synthetic protease inhibitors (PIs), such as amprenavir, atazanavir, indinavir, loprinavir, nelfinavir, ritonavir and saquinavir. RT can be inhibited either by nucleoside RT inhibitors (NRTIs) or by non nucleoside RT inhibitors (NNRTIs). NRTIs act as chain terminators, whereas NNRTIs inhibit DNA polymerization by binding a small hydrophobic pocket near the RT active site and inducing an allosteric change in this region. Classical NRTIs are abacavir, adefovir (PMEA), didanosine (ddI), lamivudine (3TC), stavudine (d4T), tenofovir (PMPA), zalcitabine (ddC), and zidovudine (AZT). Classical NNRTIs are atevirdine (BHAP U-87201E), delavirdine, efavirenz (DMP-266), emivirine (I-EBU), and nevirapine (BI-RG-587). The tritherapies used as a basic effective treatment of AIDS associate two NRTIs and one NNRTI. Use of protease inhibitors in tritherapy regimens permit more ambitious therapeutic strategies. In terms of biological role, gag-Pol polyprotein and Gag polyprotein may regulate their own translation, by the binding genomic RNA in the 5'-UTR. At low concentration, Gag-Pol and Gag would promote translation, whereas at high concentration, the polyproteins encapsidate genomic RNA and then shut off translation. Its function is as follows. Matrix protein p17 has two main functions: in infected cell, it targets Gag and Gag-pol polyproteins to the plasma membrane via a multipartite membrane-binding signal, that includes its myristointegration complex. The myristoylation signal and the NLS exert conflicting influences its subcellular localization. The key regulation of these motifs might be phosphorylation of a portion of MA molecules on the C-terminal tyrosine at the time of virus maturation, by virion-associated cellular tyrosine kinase. Implicated in the release from host cell mediated by Vpu. Capsid protein p24 forms the conical core that encapsulates the genomic RNA-nucleocapsid complex in the virion. The core is constituted by capsid protein hexamer subunits. The core is disassembled soon after virion entry. Interaction with host PPIA/CYPA protects the virus from restriction by host TRIM5-alpha and from an unknown antiviral activity in host cells. This capsid restriction by TRIM5 is one of the factors which restricts SIV to the simian species. Functionally, nucleocapsid protein p7 encapsulates and protects viral dimeric unspliced (genomic) RNA. Binds these RNAs through its zinc fingers. Facilitates rearangement of nucleic acid secondary structure during retrotranscription of genomic RNA. This capability is referred to as nucleic acid chaperone activity. In terms of biological role, the aspartyl protease mediates proteolytic cleavages of Gag and Gag-Pol polyproteins during or shortly after the release of the virion from the plasma membrane. Cleavages take place as an ordered, step-wise cascade to yield mature proteins. This process is called maturation. Displays maximal activity during the budding process just prior to particle release from the cell. Also cleaves Nef and Vif, probably concomitantly with viral structural proteins on maturation of virus particles. Hydrolyzes host EIF4GI and PABP1 in order to shut off the capped cellular mRNA translation. The resulting inhibition of cellular protein synthesis serves to ensure maximal viral gene expression and to evade host immune response. Its function is as follows. Reverse transcriptase/ribonuclease H (RT) is a multifunctional enzyme that converts the viral dimeric RNA genome into dsDNA in the cytoplasm, shortly after virus entry into the cell. This enzyme displays a DNA polymerase activity that can copy either DNA or RNA templates, and a ribonuclease H (RNase H) activity that cleaves the RNA strand of RNA-DNA heteroduplexes in a partially processive 3' to 5' endonucleasic mode. Conversion of viral genomic RNA into dsDNA requires many steps. A tRNA binds to the primer-binding site (PBS) situated at the 5'-end of the viral RNA. RT uses the 3' end of the tRNA primer to perform a short round of RNA-dependent minus-strand DNA synthesis. The reading proceeds through the U5 region and ends after the repeated (R) region which is present at both ends of viral RNA. The portion of the RNA-DNA heteroduplex is digested by the RNase H, resulting in a ssDNA product attached to the tRNA primer. This ssDNA/tRNA hybridizes with the identical R region situated at the 3' end of viral RNA. This template exchange, known as minus-strand DNA strong stop transfer, can be either intra- or intermolecular. RT uses the 3' end of this newly synthesized short ssDNA to perform the RNA-dependent minus-strand DNA synthesis of the whole template. RNase H digests the RNA template except for two polypurine tracts (PPTs) situated at the 5'-end and near the center of the genome. It is not clear if both polymerase and RNase H activities are simultaneous. RNase H can probably proceed both in a polymerase-dependent (RNA cut into small fragments by the same RT performing DNA synthesis) and a polymerase-independent mode (cleavage of remaining RNA fragments by free RTs). Secondly, RT performs DNA-directed plus-strand DNA synthesis using the PPTs that have not been removed by RNase H as primers. PPTs and tRNA primers are then removed by RNase H. The 3' and 5' ssDNA PBS regions hybridize to form a circular dsDNA intermediate. Strand displacement synthesis by RT to the PBS and PPT ends produces a blunt ended, linear dsDNA copy of the viral genome that includes long terminal repeats (LTRs) at both ends. Integrase catalyzes viral DNA integration into the host chromosome, by performing a series of DNA cutting and joining reactions. This enzyme activity takes place after virion entry into a cell and reverse transcription of the RNA genome in dsDNA. The first step in the integration process is 3' processing. This step requires a complex comprising the viral genome, matrix protein, Vpr and integrase. This complex is called the pre-integration complex (PIC). The integrase protein removes 2 nucleotides from each 3' end of the viral DNA, leaving recessed CA OH's at the 3' ends. In the second step, the PIC enters cell nucleus. This process is mediated through integrase and Vpr proteins, and allows the virus to infect a non dividing cell. This ability to enter the nucleus is specific of lentiviruses, other retroviruses cannot and rely on cell division to access cell chromosomes. In the third step, termed strand transfer, the integrase protein joins the previously processed 3' ends to the 5' ends of strands of target cellular DNA at the site of integration. The 5'-ends are produced by integrase-catalyzed staggered cuts, 5 bp apart. A Y-shaped, gapped, recombination intermediate results, with the 5'-ends of the viral DNA strands and the 3' ends of target DNA strands remaining unjoined, flanking a gap of 5 bp. The last step is viral DNA integration into host chromosome. This involves host DNA repair synthesis in which the 5 bp gaps between the unjoined strands are filled in and then ligated. Since this process occurs at both cuts flanking the SIV genome, a 5 bp duplication of host DNA is produced at the ends of SIV integration. Alternatively, Integrase may catalyze the excision of viral DNA just after strand transfer, this is termed disintegration. This is Gag-Pol polyprotein (gag-pol) from Cercopithecidae (Old World monkeys).